The primary structure comprises 304 residues: Peptidyl-prolyl cis-trans isomerase FKBP35 (304 aa).

The 90-residue stretch at 37–126 (GNEVTVHYVG…LFEIELLSFR (90 aa)) folds into the PPIase FKBP-type domain. TPR repeat units follow at residues 144–177 (AFDI…FIHT), 194–227 (ISCN…DKNN), and 228–261 (VKAL…NPNN).

The protein belongs to the FKBP-type PPIase family. As to quaternary structure, homodimer. Interacts (via TPR repeats) with HSP90 (probably via MEEVD motif).

The protein resides in the cytoplasm. Its subcellular location is the nucleus. It carries out the reaction [protein]-peptidylproline (omega=180) = [protein]-peptidylproline (omega=0). Its activity is regulated as follows. Inhibited by FK506 and its derivates, such as ascomycin, and rapamycin. FK506 and rapamycin inhibit peptidylprolyl isomerase activity but not chaperone activity. Inhibited by N-(2-ethyl-phenyl)-2-(3H-imidazao [4, 5-b] pyridin-2-yl-sulfanyl)-acetamide (D44). Not inhibited by cyclosporin A. Inhibition of calcineurin phosphatase activity is enhanced by FK506. Functionally, has peptidylprolyl isomerase (PPIase) and co-chaperone activities. Assists protein folding by catalyzing the peptidyl conversion of cis and trans rotamers of the prolyl amide bond of protein substrates. Inhibits calcineurin phosphatase activity in vitro. Plays an essential role in merozoite egress from host erythrocytes. The protein is Peptidyl-prolyl cis-trans isomerase FKBP35 of Plasmodium falciparum (isolate 3D7).